A 435-amino-acid polypeptide reads, in one-letter code: uncharacterized protein (435 aa).

The protein belongs to the herpesviridae UL49 family.

This is an uncharacterized protein from Saimiriine herpesvirus 2 (strain 11) (SaHV-2).